The sequence spans 147 residues: uncharacterized protein (147 aa).

This is an uncharacterized protein from Ureaplasma parvum serovar 3 (strain ATCC 700970).